The sequence spans 186 residues: MTSTVNQSLDDFMGRFAAFVKEHAEAGAIEYDEDWPSPCYATDVTPESGTSIPWKPVLREQTSEFKDLSEALELTLHPDVAQFYSRYWSDNIVAQHPSGKLQILQAWNEEDFERLQQNIVGHILMKRRLRQPETIFIALTDEDDFVLSVDNQTGAVMLEQVGLQPKEQISPDLATFLDEIEPTTTD.

This sequence belongs to the Syd family.

It localises to the cell inner membrane. Functionally, interacts with the SecY protein in vivo. May bind preferentially to an uncomplexed state of SecY, thus functioning either as a chelating agent for excess SecY in the cell or as a regulatory factor that negatively controls the translocase function. The protein is Protein Syd of Pseudoalteromonas atlantica (strain T6c / ATCC BAA-1087).